The primary structure comprises 343 residues: 7-epi-alpha-eudesmol synthase ((2E,6E)-farnesyl diphosphate cyclizing) (343 aa).

Aspartate 80 and aspartate 84 together coordinate Mg(2+). The short motif at 80-84 (DDQFD) is the DDXXD motif element. Arginine 177 contacts substrate. Mg(2+)-binding residues include asparagine 223 and serine 227. Arginine 230 provides a ligand contact to substrate. Glutamate 231 contacts Mg(2+). Position 317-318 (317-318 (RY)) interacts with substrate.

The protein belongs to the terpene synthase family. Requires Mg(2+) as cofactor.

The enzyme catalyses (2E,6E)-farnesyl diphosphate + H2O = 7-epi-alpha-eudesmol + diphosphate. The protein operates within secondary metabolite biosynthesis; terpenoid biosynthesis. Catalyzes the conversion of (2E,6E)-farnesyl diphosphate (FPP) to yield the bicyclic sesquiterpenol 7-epi-alpha-eudesmol via a 1,10-cyclization, which requires the abstraction of the pyrophosphate from FPP to yield the (E,E)-germacradienyl cation. The only accepted substrate is (2E,6E)-farnesyl diphosphate (FPP). In Streptomyces viridochromogenes (strain DSM 40736 / JCM 4977 / BCRC 1201 / Tue 494), this protein is 7-epi-alpha-eudesmol synthase ((2E,6E)-farnesyl diphosphate cyclizing).